The chain runs to 400 residues: MYSGNRSGDQGYWEDGAGAEGAAPAGTRSPAPLFSPTAYERLALLLGCLALLGVGGNLLVLLLYSKFPRLRTPTHLFLVNLSLGDLLVSLFGVTFTFASCLRNGWVWDAVGCAWDGFSGSLFGFVSITTLTVLAYERYIRVVHARVINFSWAWRAITYIWLYSLAWAGAPLLGWNRYILDIHGLGCTVDWRSKDANDSSFVLFLFLGCLVVPVGIIAHCYGHILYSVRMLRCVEDLQTIQVIKMLRYEKKVAKMCFLMAFVFLTCWMPYIVTRFLVVNGYGHLVTPTVSIVSYLFAKSSTVYNPVIYIFMNRKFRRSLLQLLCFRLLRCQRPAKNLPAAESEMHIRPIVMSQKDGDRPKKKVTFNSSSIIFIITSDESLSVEDSDRSSASKVDVIQVRPL.

Topologically, residues 1-38 are extracellular; sequence MYSGNRSGDQGYWEDGAGAEGAAPAGTRSPAPLFSPTA. A glycan (N-linked (GlcNAc...) asparagine) is linked at Asn-5. A helical transmembrane segment spans residues 39-63; sequence YERLALLLGCLALLGVGGNLLVLLL. At 64 to 75 the chain is on the cytoplasmic side; sequence YSKFPRLRTPTH. A helical membrane pass occupies residues 76 to 100; the sequence is LFLVNLSLGDLLVSLFGVTFTFASC. Topologically, residues 101 to 115 are extracellular; sequence LRNGWVWDAVGCAWD. Residues Cys-112 and Cys-186 are joined by a disulfide bond. The helical transmembrane segment at 116-135 threads the bilayer; that stretch reads GFSGSLFGFVSITTLTVLAY. At 136-151 the chain is on the cytoplasmic side; sequence ERYIRVVHARVINFSW. A helical membrane pass occupies residues 152–175; the sequence is AWRAITYIWLYSLAWAGAPLLGWN. The Extracellular portion of the chain corresponds to 176–199; that stretch reads RYILDIHGLGCTVDWRSKDANDSS. Asn-196 carries N-linked (GlcNAc...) asparagine glycosylation. Residues 200–227 form a helical membrane-spanning segment; it reads FVLFLFLGCLVVPVGIIAHCYGHILYSV. Over 228-253 the chain is Cytoplasmic; the sequence is RMLRCVEDLQTIQVIKMLRYEKKVAK. Residues 254–277 traverse the membrane as a helical segment; the sequence is MCFLMAFVFLTCWMPYIVTRFLVV. Topologically, residues 278–285 are extracellular; the sequence is NGYGHLVT. A helical membrane pass occupies residues 286-310; sequence PTVSIVSYLFAKSSTVYNPVIYIFM. An N6-(retinylidene)lysine modification is found at Lys-297. Residues 311 to 400 are Cytoplasmic-facing; it reads NRKFRRSLLQ…KVDVIQVRPL (90 aa). The S-palmitoyl cysteine moiety is linked to residue Cys-323.

Belongs to the G-protein coupled receptor 1 family. Opsin subfamily. As to quaternary structure, interacts with MC1R; the interaction results in a decrease in MC1R-mediated cAMP signaling and ultimately a decrease in melanin production in melanocytes. As to expression, expressed in the eye (at protein level). Expressed in tracheal airway smooth muscle. Expressed in brown adipocyte tissue; expression becomes more abundant during differentiation. Strongly expressed in brain. Highly expressed in the preoptic area and paraventricular nucleus of the hypothalamus. Shows highly patterned expression in other regions of the brain, being enriched in selected regions of the cerebral cortex, cerebellar Purkinje cells, a subset of striatal neurons, selected thalamic nuclei, and a subset of interneurons in the ventral horn of the spinal cord.

The protein resides in the cell membrane. Its subcellular location is the cytoplasm. Its function is as follows. G-protein coupled receptor which selectively activates G proteins via ultraviolet A (UVA) light-mediated activation in the skin. Binds both 11-cis retinal and all-trans retinal. Regulates melanogenesis in melanocytes via inhibition of alpha-MSH-induced MC1R-mediated cAMP signaling, modulation of calcium flux, regulation of CAMK2 phosphorylation, and subsequently phosphorylation of CREB, p38, ERK and MITF in response to blue light. Plays a role in melanocyte survival through regulation of intracellular calcium levels and subsequent BCL2/RAF1 signaling. Additionally regulates apoptosis via cytochrome c release and subsequent activation of the caspase cascade. Required for TYR and DCT blue light-induced complex formation in melanocytes. Involved in keratinocyte differentiation in response to blue-light. Required for the UVA-mediated induction of calcium and mitogen-activated protein kinase signaling resulting in the expression of MMP1, MMP2, MMP3, MMP9 and TIMP1 in dermal fibroblasts. Plays a role in light-mediated glucose uptake, mitochondrial respiration and fatty acid metabolism in brown adipocyte tissues. May be involved in photorelaxation of airway smooth muscle cells, via blue-light dependent GPCR signaling pathways. This Mus musculus (Mouse) protein is Opsin-3 (Opn3).